Consider the following 291-residue polypeptide: Nitrogenase iron protein (291 aa).

Residue 11 to 18 (GKGGIGKS) participates in ATP binding. [4Fe-4S] cluster is bound at residue cysteine 99. Arginine 102 carries the ADP-ribosylarginine; by dinitrogenase reductase ADP-ribosyltransferase modification. Cysteine 133 is a binding site for [4Fe-4S] cluster.

The protein belongs to the NifH/BchL/ChlL family. In terms of assembly, homodimer. The cofactor is [4Fe-4S] cluster. Post-translationally, the reversible ADP-ribosylation of Arg-102 inactivates the nitrogenase reductase and regulates nitrogenase activity.

The catalysed reaction is N2 + 8 reduced [2Fe-2S]-[ferredoxin] + 16 ATP + 16 H2O = H2 + 8 oxidized [2Fe-2S]-[ferredoxin] + 2 NH4(+) + 16 ADP + 16 phosphate + 6 H(+). In terms of biological role, the key enzymatic reactions in nitrogen fixation are catalyzed by the nitrogenase complex, which has 2 components: the iron protein and the molybdenum-iron protein. The protein is Nitrogenase iron protein of Cereibacter sphaeroides (strain ATCC 17023 / DSM 158 / JCM 6121 / CCUG 31486 / LMG 2827 / NBRC 12203 / NCIMB 8253 / ATH 2.4.1.) (Rhodobacter sphaeroides).